The sequence spans 260 residues: Methanethiol S-methyltransferase (260 aa).

The next 5 membrane-spanning stretches (helical) occupy residues 27-47 (CYLF…GIGV), 55-75 (PGIT…LFAA), 107-127 (CLVL…VWNV), 134-154 (GLLI…TFLI), and 196-216 (FLIA…FAIL).

Belongs to the nurim family.

The protein localises to the membrane. It catalyses the reaction methanethiol + S-adenosyl-L-methionine = dimethyl sulfide + S-adenosyl-L-homocysteine + H(+). Functionally, catalyzes the methylation of methanethiol (MeSH) to yield dimethylsulphide (DMS). This Pseudomonas sp. (strain GM41(2012)) protein is Methanethiol S-methyltransferase.